Here is a 103-residue protein sequence, read N- to C-terminus: Secreted LysM effector Mgx1LysM (103 aa).

The signal sequence occupies residues 1–18 (MKVTTIIAALLSVAVVDA). Disulfide bonds link cysteine 31–cysteine 89 and cysteine 62–cysteine 97. The LysM domain occupies 37–85 (IPYVVKKGDTLTHIAHDIYKRKVGICDLAYTNHIGYNPDLIYEDQTLLI). The chitin site is built by glycine 44, threonine 48, aspartate 75, and isoleucine 77.

The protein belongs to the secreted LysM effector family. As to quaternary structure, forms homodimers in a chitin-independent manner through interactions at the N-termini of Mgx1LysM monomers. Homodimers are further polymerized in a chitin-dependent manner.

Its subcellular location is the secreted. It localises to the cell wall. Its function is as follows. Secreted effector that enables the plant pathogenic fungus to manipulate host defenses for successful infection. Binds chitin and suppresses the chitin-induced reactive oxygen species (ROS) burst. Chitin-induced polymerization of homodimers forms a contiguous Mg1LysM highly oligomeric super-complexe that is anchored to the chitin in the fungal cell wall to prevent hydrolysis by host chitinases. The sequence is that of Secreted LysM effector Mgx1LysM from Zymoseptoria tritici (strain CBS 115943 / IPO323) (Speckled leaf blotch fungus).